Here is an 87-residue protein sequence, read N- to C-terminus: uncharacterized protein (87 aa).

An N-terminal signal peptide occupies residues 1–19; the sequence is MLVLQLAVLVTAVYAFVHA. A helical transmembrane segment spans residues 51–71; that stretch reads ILGFVFGVLGIVIAACAAGVY.

The protein to M.tuberculosis Rv0476.

The protein localises to the membrane. This is an uncharacterized protein from Mycobacterium leprae (strain TN).